The following is a 72-amino-acid chain: UPF0150 protein jhp_0960 (72 aa).

This sequence belongs to the UPF0150 family.

This chain is UPF0150 protein jhp_0960, found in Helicobacter pylori (strain J99 / ATCC 700824) (Campylobacter pylori J99).